A 380-amino-acid chain; its full sequence is Protein FAM110B (380 aa).

The interval 92-272 is disordered; the sequence is ALGSPTLKGF…RPSLQRSKSD (181 aa). The span at 100–110 shows a compositional bias: gly residues; that stretch reads GFGGGGGGAKS. Positions 127–138 are enriched in polar residues; that stretch reads ILNSSEGSSTGS. Over residues 153–162 the composition is skewed to basic and acidic residues; the sequence is DAAELHRHSF. The span at 239 to 248 shows a compositional bias: low complexity; the sequence is KVAAPAAVKS. A phosphoserine mark is found at S248 and S311. The tract at residues 327–347 is disordered; the sequence is DCEQSQDSNSDLRNDDSANDR. The span at 336–345 shows a compositional bias: basic and acidic residues; it reads SDLRNDDSAN.

The protein belongs to the FAM110 family.

The protein resides in the cytoplasm. Its subcellular location is the cytoskeleton. It localises to the microtubule organizing center. The protein localises to the centrosome. The sequence is that of Protein FAM110B (FAM110B) from Bos taurus (Bovine).